We begin with the raw amino-acid sequence, 430 residues long: Adenylosuccinate synthetase (430 aa).

GTP is bound by residues 12-18 and 40-42; these read GDEGKGK and GHT. Asp13 functions as the Proton acceptor in the catalytic mechanism. Mg(2+)-binding residues include Asp13 and Gly40. Residues 13–16, 38–41, Thr130, Arg144, Gln224, Thr239, and Arg303 each bind IMP; these read DEGK and NAGH. The active-site Proton donor is the His41. 299–305 is a binding site for substrate; the sequence is TNTGRPR. Residues Arg305, 331–333, and 413–415 each bind GTP; these read KLD and STS.

Belongs to the adenylosuccinate synthetase family. In terms of assembly, homodimer. The cofactor is Mg(2+).

Its subcellular location is the cytoplasm. The enzyme catalyses IMP + L-aspartate + GTP = N(6)-(1,2-dicarboxyethyl)-AMP + GDP + phosphate + 2 H(+). Its pathway is purine metabolism; AMP biosynthesis via de novo pathway; AMP from IMP: step 1/2. In terms of biological role, plays an important role in the de novo pathway of purine nucleotide biosynthesis. Catalyzes the first committed step in the biosynthesis of AMP from IMP. In Rhodopseudomonas palustris (strain HaA2), this protein is Adenylosuccinate synthetase.